A 370-amino-acid polypeptide reads, in one-letter code: 3-dehydroquinate synthase (370 aa).

NAD(+) contacts are provided by residues 107 to 111 (GVIGD), 131 to 132 (TS), Lys-144, and Lys-153. Zn(2+) contacts are provided by Glu-186, His-249, and His-267.

Belongs to the sugar phosphate cyclases superfamily. Dehydroquinate synthase family. It depends on Co(2+) as a cofactor. The cofactor is Zn(2+). NAD(+) serves as cofactor.

The protein localises to the cytoplasm. The enzyme catalyses 7-phospho-2-dehydro-3-deoxy-D-arabino-heptonate = 3-dehydroquinate + phosphate. It functions in the pathway metabolic intermediate biosynthesis; chorismate biosynthesis; chorismate from D-erythrose 4-phosphate and phosphoenolpyruvate: step 2/7. Catalyzes the conversion of 3-deoxy-D-arabino-heptulosonate 7-phosphate (DAHP) to dehydroquinate (DHQ). The protein is 3-dehydroquinate synthase of Jannaschia sp. (strain CCS1).